Consider the following 163-residue polypeptide: NADH-quinone oxidoreductase subunit I (163 aa).

2 4Fe-4S ferredoxin-type domains span residues 53 to 83 (LRRY…IEAG) and 94 to 123 (VRYD…EGPN). [4Fe-4S] cluster-binding residues include C63, C66, C69, C73, C103, C106, C109, and C113.

The protein belongs to the complex I 23 kDa subunit family. NDH-1 is composed of 14 different subunits. Subunits NuoA, H, J, K, L, M, N constitute the membrane sector of the complex. [4Fe-4S] cluster serves as cofactor.

It localises to the cell inner membrane. It catalyses the reaction a quinone + NADH + 5 H(+)(in) = a quinol + NAD(+) + 4 H(+)(out). Its function is as follows. NDH-1 shuttles electrons from NADH, via FMN and iron-sulfur (Fe-S) centers, to quinones in the respiratory chain. The immediate electron acceptor for the enzyme in this species is believed to be ubiquinone. Couples the redox reaction to proton translocation (for every two electrons transferred, four hydrogen ions are translocated across the cytoplasmic membrane), and thus conserves the redox energy in a proton gradient. The polypeptide is NADH-quinone oxidoreductase subunit I (Chelativorans sp. (strain BNC1)).